The following is a 95-amino-acid chain: MPSSHIVLKEETRMLGLMYAIWMNLNSFGLAIIGILLIACEIILFLTKDETIQWPHVPSNRGSKANLILKELQLLVRSTWWFHRETAQRTCLYLA.

Residues 27–47 (SFGLAIIGILLIACEIILFLT) form a helical membrane-spanning segment.

It localises to the membrane. This is an uncharacterized protein from Homo sapiens (Human).